Reading from the N-terminus, the 170-residue chain is Adenine phosphoribosyltransferase (170 aa).

This sequence belongs to the purine/pyrimidine phosphoribosyltransferase family. As to quaternary structure, homodimer.

It is found in the cytoplasm. It catalyses the reaction AMP + diphosphate = 5-phospho-alpha-D-ribose 1-diphosphate + adenine. The protein operates within purine metabolism; AMP biosynthesis via salvage pathway; AMP from adenine: step 1/1. In terms of biological role, catalyzes a salvage reaction resulting in the formation of AMP, that is energically less costly than de novo synthesis. This chain is Adenine phosphoribosyltransferase, found in Brachyspira hyodysenteriae (strain ATCC 49526 / WA1).